A 255-amino-acid polypeptide reads, in one-letter code: Myb-related protein Zm38 (255 aa).

HTH myb-type domains follow at residues 9 to 61 and 62 to 116; these read KAHT…INYL and RPDL…RRKL. DNA-binding regions (H-T-H motif) lie at residues 37-61 and 89-112; these read WRSLPKAAGLLRCGKSCRLRWINYL and WSLIAARLPGRTDNEIKNYWNTHV.

The protein resides in the nucleus. Transcription factor that negatively regulates genes involved in anthocyanin biosynthesis. The protein is Myb-related protein Zm38 of Zea mays (Maize).